Consider the following 507-residue polypeptide: Flagellar hook-associated protein 1 (507 aa).

This sequence belongs to the flagella basal body rod proteins family.

It is found in the secreted. The protein localises to the bacterial flagellum. This is Flagellar hook-associated protein 1 (flgK) from Bacillus subtilis (strain 168).